An 841-amino-acid polypeptide reads, in one-letter code: Translation initiation factor IF-2 (841 aa).

Composition is skewed to basic and acidic residues over residues 1 to 12 (MSDNEIKNEAPK), 50 to 92 (EAAL…EATK), 114 to 170 (EQPK…REEA), 188 to 202 (READRDNDRRSEANR), and 213 to 235 (KKGDREDKNERNADRRNQKDVKG). Disordered stretches follow at residues 1 to 24 (MSDNEIKNEAPKKLSLQRRTKTTV) and 50 to 246 (EAAL…GSAL). One can recognise a tr-type G domain in the interval 340 to 510 (TRAPVVTIMG…LLQSEVLELT (171 aa)). The interval 349-356 (GHVDHGKT) is G1. 349–356 (GHVDHGKT) serves as a coordination point for GTP. The tract at residues 374 to 378 (GITQH) is G2. The interval 396–399 (DTPG) is G3. Residues 396 to 400 (DTPGH) and 450 to 453 (NKID) each bind GTP. Residues 450 to 453 (NKID) are G4. The G5 stretch occupies residues 486–488 (SAK).

This sequence belongs to the TRAFAC class translation factor GTPase superfamily. Classic translation factor GTPase family. IF-2 subfamily.

It is found in the cytoplasm. One of the essential components for the initiation of protein synthesis. Protects formylmethionyl-tRNA from spontaneous hydrolysis and promotes its binding to the 30S ribosomal subunits. Also involved in the hydrolysis of GTP during the formation of the 70S ribosomal complex. The protein is Translation initiation factor IF-2 of Actinobacillus pleuropneumoniae serotype 3 (strain JL03).